A 225-amino-acid chain; its full sequence is ATP-dependent Clp protease proteolytic subunit (225 aa).

Ser123 (nucleophile) is an active-site residue. Residue His148 is part of the active site.

Belongs to the peptidase S14 family. In terms of assembly, fourteen ClpP subunits assemble into 2 heptameric rings which stack back to back to give a disk-like structure with a central cavity, resembling the structure of eukaryotic proteasomes.

It localises to the cytoplasm. The enzyme catalyses Hydrolysis of proteins to small peptides in the presence of ATP and magnesium. alpha-casein is the usual test substrate. In the absence of ATP, only oligopeptides shorter than five residues are hydrolyzed (such as succinyl-Leu-Tyr-|-NHMec, and Leu-Tyr-Leu-|-Tyr-Trp, in which cleavage of the -Tyr-|-Leu- and -Tyr-|-Trp bonds also occurs).. Cleaves peptides in various proteins in a process that requires ATP hydrolysis. Has a chymotrypsin-like activity. Plays a major role in the degradation of misfolded proteins. The chain is ATP-dependent Clp protease proteolytic subunit from Chlorobium phaeovibrioides (strain DSM 265 / 1930) (Prosthecochloris vibrioformis (strain DSM 265)).